We begin with the raw amino-acid sequence, 200 residues long: Holliday junction branch migration complex subunit RuvA (200 aa).

The interval 1 to 64 is domain I; sequence MYAYFRGRLV…EDALQLYGFA (64 aa). A domain II region spans residues 65 to 143; sequence TEEEKQLFRL…KLAPVGSAVA (79 aa). The tract at residues 144-154 is flexible linker; it reads SVAADRGGFRE. The interval 154 to 200 is domain III; sequence EDAVNALMTLGFPRPVANQAVGCALEPEPDASLEVVIKRALATMHNR.

The protein belongs to the RuvA family. As to quaternary structure, homotetramer. Forms an RuvA(8)-RuvB(12)-Holliday junction (HJ) complex. HJ DNA is sandwiched between 2 RuvA tetramers; dsDNA enters through RuvA and exits via RuvB. An RuvB hexamer assembles on each DNA strand where it exits the tetramer. Each RuvB hexamer is contacted by two RuvA subunits (via domain III) on 2 adjacent RuvB subunits; this complex drives branch migration. In the full resolvosome a probable DNA-RuvA(4)-RuvB(12)-RuvC(2) complex forms which resolves the HJ.

It localises to the cytoplasm. The RuvA-RuvB-RuvC complex processes Holliday junction (HJ) DNA during genetic recombination and DNA repair, while the RuvA-RuvB complex plays an important role in the rescue of blocked DNA replication forks via replication fork reversal (RFR). RuvA specifically binds to HJ cruciform DNA, conferring on it an open structure. The RuvB hexamer acts as an ATP-dependent pump, pulling dsDNA into and through the RuvAB complex. HJ branch migration allows RuvC to scan DNA until it finds its consensus sequence, where it cleaves and resolves the cruciform DNA. The polypeptide is Holliday junction branch migration complex subunit RuvA (Chlorobium phaeovibrioides (strain DSM 265 / 1930) (Prosthecochloris vibrioformis (strain DSM 265))).